The primary structure comprises 218 residues: Ribonuclease HII (218 aa).

One can recognise an RNase H type-2 domain in the interval 22–211 (VRIAGVDEAG…VRAALESRFS (190 aa)). Residues Asp28, Glu29, and Asp119 each contribute to the a divalent metal cation site.

It belongs to the RNase HII family. It depends on Mn(2+) as a cofactor. Mg(2+) is required as a cofactor.

It localises to the cytoplasm. It catalyses the reaction Endonucleolytic cleavage to 5'-phosphomonoester.. Its function is as follows. Endonuclease that specifically degrades the RNA of RNA-DNA hybrids. This is Ribonuclease HII from Maricaulis maris (strain MCS10) (Caulobacter maris).